The primary structure comprises 285 residues: Putative ABC transporter ATP-binding protein CPE0195 (285 aa).

An ABC transporter domain is found at 6-242; the sequence is LKVEELNYNY…KEVIRKVNLR (237 aa). 39-46 is a binding site for ATP; sequence GGNGVGKS.

Belongs to the ABC transporter superfamily.

It localises to the cell membrane. Probably part of an ABC transporter complex. Responsible for energy coupling to the transport system. This chain is Putative ABC transporter ATP-binding protein CPE0195, found in Clostridium perfringens (strain 13 / Type A).